Here is a 134-residue protein sequence, read N- to C-terminus: Interleukin-5 (134 aa).

The N-terminal stretch at 1–21 (MRMHLHLTLVALGAAYVCANA) is a signal peptide. 2 N-linked (GlcNAc...) asparagine glycosylation sites follow: Asn-76 and Asn-90.

The protein belongs to the IL-5 family. As to quaternary structure, homodimer; disulfide-linked. Interacts with IL5RA. Interacts with CSF2RB.

Its subcellular location is the secreted. Functionally, homodimeric cytokine expressed predominantly by T-lymphocytes and NK cells that plays an important role in the survival, differentiation, and chemotaxis of eosinophils. Also acts on activated and resting B-cells to induce immunoglobulin production, growth, and differentiation. Mechanistically, exerts its biological effects through a receptor composed of IL5RA subunit and the cytokine receptor common subunit beta/CSF2RB. Binding to the receptor leads to activation of various kinases including LYN, SYK and JAK2 and thereby propagates signals through the RAS-MAPK and JAK-STAT5 pathways respectively. This is Interleukin-5 (IL5) from Bos taurus (Bovine).